Here is a 266-residue protein sequence, read N- to C-terminus: Thiazole synthase (266 aa).

The active-site Schiff-base intermediate with DXP is Lys110. 1-deoxy-D-xylulose 5-phosphate contacts are provided by residues Gly171, 197–198 (AG), and 219–220 (AT).

It belongs to the ThiG family. Homotetramer. Forms heterodimers with either ThiH or ThiS.

The protein resides in the cytoplasm. It carries out the reaction [ThiS sulfur-carrier protein]-C-terminal-Gly-aminoethanethioate + 2-iminoacetate + 1-deoxy-D-xylulose 5-phosphate = [ThiS sulfur-carrier protein]-C-terminal Gly-Gly + 2-[(2R,5Z)-2-carboxy-4-methylthiazol-5(2H)-ylidene]ethyl phosphate + 2 H2O + H(+). It functions in the pathway cofactor biosynthesis; thiamine diphosphate biosynthesis. Its function is as follows. Catalyzes the rearrangement of 1-deoxy-D-xylulose 5-phosphate (DXP) to produce the thiazole phosphate moiety of thiamine. Sulfur is provided by the thiocarboxylate moiety of the carrier protein ThiS. In vitro, sulfur can be provided by H(2)S. This chain is Thiazole synthase, found in Thermobifida fusca (strain YX).